A 1222-amino-acid polypeptide reads, in one-letter code: ATP-dependent helicase/nuclease subunit A (1222 aa).

The UvrD-like helicase ATP-binding domain maps to 39-495 (QKRTAQQIEA…ILLKENFRSQ (457 aa)). 60–67 (ASAGSGKT) serves as a coordination point for ATP. The UvrD-like helicase C-terminal domain maps to 524–810 (QLIAGSHAQT…NLMTIHKSKG (287 aa)).

It belongs to the helicase family. AddA subfamily. As to quaternary structure, heterodimer of AddA and AddB/RexB. The cofactor is Mg(2+).

The catalysed reaction is Couples ATP hydrolysis with the unwinding of duplex DNA by translocating in the 3'-5' direction.. The enzyme catalyses ATP + H2O = ADP + phosphate + H(+). Functionally, the heterodimer acts as both an ATP-dependent DNA helicase and an ATP-dependent, dual-direction single-stranded exonuclease. Recognizes the chi site generating a DNA molecule suitable for the initiation of homologous recombination. The AddA nuclease domain is required for chi fragment generation; this subunit has the helicase and 3' -&gt; 5' nuclease activities. This is ATP-dependent helicase/nuclease subunit A from Streptococcus pyogenes serotype M12 (strain MGAS2096).